Here is a 132-residue protein sequence, read N- to C-terminus: Large ribosomal subunit protein bL12 (132 aa).

It belongs to the bacterial ribosomal protein bL12 family. In terms of assembly, homodimer. Part of the ribosomal stalk of the 50S ribosomal subunit. Forms a multimeric L10(L12)X complex, where L10 forms an elongated spine to which 2 to 4 L12 dimers bind in a sequential fashion. Binds GTP-bound translation factors.

Forms part of the ribosomal stalk which helps the ribosome interact with GTP-bound translation factors. Is thus essential for accurate translation. The protein is Large ribosomal subunit protein bL12 of Chloroflexus aggregans (strain MD-66 / DSM 9485).